The following is a 340-amino-acid chain: Guanine nucleotide-binding protein G(I)/G(S)/G(T) subunit beta-3 (340 aa).

WD repeat units lie at residues 53-83, 95-125, 141-170, 182-212, 224-254, 268-298, and 310-340; these read GHLA…IVWD, LRSS…SIYS, AHTG…ALWD, GHTG…KLWD, GHES…RLFD, SIIC…NIWD, and GHDN…KVWN.

Belongs to the WD repeat G protein beta family. In terms of assembly, g proteins are composed of 3 units, alpha, beta and gamma. Interacts with RASD2.

The protein localises to the cytoplasm. Its subcellular location is the perinuclear region. Functionally, guanine nucleotide-binding proteins (G proteins) are involved as a modulator or transducer in various transmembrane signaling systems. The beta and gamma chains are required for the GTPase activity, for replacement of GDP by GTP, and for G protein-effector interaction. This is Guanine nucleotide-binding protein G(I)/G(S)/G(T) subunit beta-3 (GNB3) from Canis lupus familiaris (Dog).